The sequence spans 509 residues: Maturase K (509 aa).

The protein belongs to the intron maturase 2 family. MatK subfamily.

The protein resides in the plastid. It localises to the chloroplast. In terms of biological role, usually encoded in the trnK tRNA gene intron. Probably assists in splicing its own and other chloroplast group II introns. This Anthocercis angustifolia (Narrow-leaf ray-flower) protein is Maturase K.